The sequence spans 579 residues: Rho guanine nucleotide exchange factor 25 (579 aa).

Disordered regions lie at residues 27 to 61 (AVPG…GERE) and 172 to 194 (VKAQ…EQKK). The 177-residue stretch at 199–375 (RSMFVLSELV…CFVPKRCNDM (177 aa)) folds into the DH domain. The tract at residues 317 to 338 (LGHRLQLSDLLIKPVQRIMKYQ) is important for binding to Rho GTPases. The PH domain occupies 380–499 (RLRGFEGKLT…ESQTNSLGRS (120 aa)). A sufficient to bind activated GNAQ region spans residues 472–498 (SQRDFLNALQSPIEYQRRESQTNSLGR). 2 disordered regions span residues 487–516 (QRRE…VSMH) and 546–579 (LSET…EDEL).

As to quaternary structure, interacts with activated GNAQ and GNA11. Interacts with RHOA, CDC42 and RAC1. Interacts (via the DH domain) with POPDC1 (via the C-terminus cytoplasmic tail).

It is found in the cytoplasm. Its subcellular location is the myofibril. It localises to the sarcomere. The protein resides in the cell membrane. In terms of biological role, may play a role in actin cytoskeleton reorganization in different tissues since its activation induces formation of actin stress fibers. It works as a guanine nucleotide exchange factor for Rho family of small GTPases. Links specifically G alpha q/11-coupled receptors to RHOA activation. May be an important regulator of processes involved in axon and dendrite formation. In neurons seems to be an exchange factor primarily for RAC1. Involved in skeletal myogenesis. The protein is Rho guanine nucleotide exchange factor 25 (Arhgef25) of Rattus norvegicus (Rat).